The sequence spans 231 residues: Putative cobalt transport protein CbiM 1 (231 aa).

Transmembrane regions (helical) follow at residues 9-29 (PGPWWQIWWILSIPVFAYGIF), 41-61 (VLPLIAVSGAVIFVLSSLKLP), 74-94 (GMAVILFGPAITSVLSAIVLL), 107-127 (TFGANLMSMGIIGPFVAYAIY), 135-155 (VNFYVSAFVTATLADWVTYVV), and 181-201 (VFAITQIPLAILEASLITLLF).

The protein belongs to the CbiM family. In terms of assembly, forms an energy-coupling factor (ECF) transporter complex composed of an ATP-binding protein (A component, CbiO), a transmembrane protein (T component, CbiQ) and 2 possible substrate-capture proteins (S components, CbiM and CbiN) of unknown stoichimetry.

The protein localises to the cell membrane. It functions in the pathway cofactor biosynthesis; adenosylcobalamin biosynthesis. Functionally, part of the energy-coupling factor (ECF) transporter complex CbiMNOQ involved in cobalt import. The sequence is that of Putative cobalt transport protein CbiM 1 from Methanosarcina barkeri (strain Fusaro / DSM 804).